Consider the following 338-residue polypeptide: Taste receptor type 2 member 39 (338 aa).

Over 1-30 the chain is Extracellular; it reads MLGRCFPPNTKEKQQLRMIKLCDPAESELS. Residues 31–51 form a helical membrane-spanning segment; the sequence is PFLITLTLAVLLAEYLTGIIA. Residues 52 to 74 are Cytoplasmic-facing; that stretch reads NGFITAIHAAEWVQNKSVSTSGR. A helical membrane pass occupies residues 75–95; that stretch reads ILVFLSVSRIALQSLMMLEIT. Residues 96–116 lie on the Extracellular side of the membrane; that stretch reads ISSTSLSFYSEDAVYYAFKIS. The helical transmembrane segment at 117 to 137 threads the bilayer; it reads FIFLNFCSLWFAAWLSFFYFV. Residues 138–156 are Cytoplasmic-facing; it reads KIANFSYPLFLKLRWRISG. A helical transmembrane segment spans residues 157–177; the sequence is LIPWLLWLSVFISFSHSMFCI. Residues 178 to 205 are Extracellular-facing; sequence NICTGYCDNSFPIHSSNSTEKTYFSEIS. N194 carries N-linked (GlcNAc...) asparagine glycosylation. A helical membrane pass occupies residues 206–226; it reads VVSLAFFFNLGIVIPLIMFIL. Residues 227–262 lie on the Cytoplasmic side of the membrane; sequence AAILLILSLKRHTLHMGSNATGSKDPSMEAHIGAIK. A helical membrane pass occupies residues 263–283; the sequence is ATSYFLILYIFNAVALFIYLS. Over 284-291 the chain is Extracellular; the sequence is NMFDINSL. The chain crosses the membrane as a helical span at residues 292–312; sequence WNTLCQIIMAAYPASHSILLI. The Cytoplasmic segment spans residues 313 to 338; that stretch reads KDNPGLRRAWKQLQHRLHLYPKQWTL.

It belongs to the G-protein coupled receptor T2R family.

The protein resides in the membrane. Receptor that may play a role in the perception of bitterness and is gustducin-linked. May play a role in sensing the chemical composition of the gastrointestinal content. The activity of this receptor may stimulate alpha gustducin, mediate PLC-beta-2 activation and lead to the gating of TRPM5. This chain is Taste receptor type 2 member 39 (TAS2R39), found in Macaca mulatta (Rhesus macaque).